A 66-amino-acid chain; its full sequence is Phylloseptin-Az2 (66 aa).

A signal peptide spans 1 to 22 (MAFLKKSLFLVLFLGLVSLSIC). A propeptide spanning residues 23 to 44 (EEEKRETEEKENEQEDDDKSEE) is cleaved from the precursor. Residues 24-45 (EEKRETEEKENEQEDDDKSEEK) form a disordered region. The segment covering 31 to 41 (EKENEQEDDDK) has biased composition (acidic residues). Phe-65 is modified (phenylalanine amide).

Expressed by the skin glands.

The protein resides in the secreted. Its function is as follows. Has antibacterial activity against the Gram-negative bacteria E.coli ATCC 11775 (MIC=7.2 uM), and the Gram-positive bacteria S.aureus ATCC 12600 (MIC=3.6 uM) and M.luteus ATCC 49732 (MIC=1.8 uM). Does not inhibit the growth of the fungus C.albicans. The polypeptide is Phylloseptin-Az2 (Pithecopus azureus (Orange-legged monkey tree frog)).